Consider the following 850-residue polypeptide: Ras GTPase-activating protein 2 (850 aa).

Residues 1–24 are compositionally biased toward low complexity; that stretch reads MAAAAPAAAAASSEAPAASATAEP. Positions 1 to 32 are disordered; that stretch reads MAAAAPAAAAASSEAPAASATAEPEAGDQDSR. N-acetylalanine is present on Ala-2. 2 consecutive C2 domains span residues 20 to 138 and 149 to 289; these read ATAE…ETWF and VQGK…QAWY. The 218-residue stretch at 372–589 folds into the Ras-GAP domain; that stretch reads DKLVPFATAV…IAVKKFLDEI (218 aa). The residue at position 555 (Ser-555) is a Phosphoserine. The 103-residue stretch at 604–706 folds into the PH domain; sequence VHLKEGEMYK…WIDVLCRVSR (103 aa). Residues 708-744 form a Btk-type zinc finger; sequence NQNRLSFYHPSVYLNGNWLCCQETGENTLGCKPCTAG. Positions 716, 727, 728, and 738 each coordinate Zn(2+). The segment at 825 to 850 is disordered; sequence HEKYRKKRSSSAKYGSKENPIVGKAS.

The protein localises to the cytoplasm. It localises to the perinuclear region. Its function is as follows. Inhibitory regulator of the Ras-cyclic AMP pathway. Binds inositol tetrakisphosphate (IP4). In Homo sapiens (Human), this protein is Ras GTPase-activating protein 2 (RASA2).